Consider the following 648-residue polypeptide: Sodium/nucleoside cotransporter 1 (648 aa).

Residues 1-83 (MADDTPRQRE…LCREHWQLFE (83 aa)) are Cytoplasmic-facing. Residues 84–104 (WISKGLLSTAYIGFLIVACLL) traverse the membrane as a helical segment. The Extracellular segment spans residues 105–108 (DFPR). A helical membrane pass occupies residues 109–129 (ALALFVITCVVLVFLAYNLLK). Residues 130–147 (RLLGSKLKKCVKFQGHSC) are Cytoplasmic-facing. The helical transmembrane segment at 148 to 168 (LSLWLKRGLALAAGLGVILWL) threads the bilayer. The Extracellular portion of the chain corresponds to 169-175 (SLDTAQR). The helical transmembrane segment at 176–196 (PEQLVSFAGICVFLVLLFAGS) threads the bilayer. The Cytoplasmic segment spans residues 197 to 201 (KHHRA). A helical membrane pass occupies residues 202–222 (VSWRAVSWGLGLQFVLGLFVI). The Extracellular portion of the chain corresponds to 223–265 (RTEPGFVAFQWLGDQIRVFLSYTEAGSSFVFGEALVKDVFAFQ). The helical transmembrane segment at 266–286 (VLPIIVFFSCVMSVLYYLGLM) threads the bilayer. Residues 287-294 (QWVILKIA) lie on the Cytoplasmic side of the membrane. A helical membrane pass occupies residues 295-318 (WLMQVTMGTSATETLSVAGNIFVS). Residues 319 to 339 (QTEAPLLIRPYLADMTLSEVH) lie on the Extracellular side of the membrane. A helical membrane pass occupies residues 340-360 (VVMTGGYATIAGSLLGAYISF). Gly361 is a topological domain (cytoplasmic). A helical transmembrane segment spans residues 362–380 (IDASSLIAASVMAAPCALA). Over 381–427 (LSKLVYPEVEESKFRSEEGVKLTYGDAQNLVEAASAGAAISVKVVAN) the chain is Extracellular. Residues 428 to 448 (IAANLIAFLAVLAFINAALSW) traverse the membrane as a helical segment. Residues 449 to 470 (LGDMVDIQGLSFQLICSYVLRP) are Cytoplasmic-facing. Residues 471 to 491 (VAFLMGVAWEDCPVVAELLGI) traverse the membrane as a helical segment. Topologically, residues 492 to 531 (KLFLNEFVAYQELSQYKQRRLAGAEEWLGDKKQWISVRAE) are extracellular. A helical membrane pass occupies residues 532–552 (ILTTYALCGFANFSSIGIMLG). Residues 553–571 (GLTSMVPQRRSDFSQIVLR) are Cytoplasmic-facing. Residues 572–592 (ALITGAFVSLVNACVAGILYV) form a helical membrane-spanning segment. Residues 593–648 (PRGVEVDCMSLLNQTVSSSSFEVYLCCRQVFQNTSLEFGQEALHNCCRFYNHTVCT) are Extracellular-facing. N-linked (GlcNAc...) asparagine glycans are attached at residues Asn605, Asn625, and Asn643.

The protein belongs to the concentrative nucleoside transporter (CNT) (TC 2.A.41) family. In terms of processing, N-glycosylated. N-glycosylation is required for localization to the plasma membrane and the transporter activity.

The protein resides in the cell membrane. The protein localises to the apical cell membrane. It carries out the reaction uridine(out) + Na(+)(out) = uridine(in) + Na(+)(in). The catalysed reaction is thymidine(out) + Na(+)(out) = thymidine(in) + Na(+)(in). The enzyme catalyses cytidine(out) + Na(+)(out) = cytidine(in) + Na(+)(in). It catalyses the reaction adenosine(out) + Na(+)(out) = adenosine(in) + Na(+)(in). Its activity is regulated as follows. Due to its high apparent affinity but slow transport, adenosine could act as a negative regulator of pyrimidine transport under some conditions. Its function is as follows. Sodium and pyrimidine nucleoside symporter of the plasma membrane that imports uridine, thymidine and cytidine into cells by coupling their transport to the transmembrane sodium electrochemical gradient. Also transports adenosine, an atypical substrate transported with high apparent affinity, but low maximum velocity. Therefore, exhibits the transport characteristics of the nucleoside transport system cit or N2 subtype (N2/cit). Involved in renal nucleoside (re)absorption. The chain is Sodium/nucleoside cotransporter 1 from Mus musculus (Mouse).